The primary structure comprises 97 residues: Small ribosomal subunit protein bS20c (97 aa).

Polar residues predominate over residues 1–15 (MSKNVSAIKKNQVSL). Positions 1–20 (MSKNVSAIKKNQVSLRNKRK) are disordered.

It belongs to the bacterial ribosomal protein bS20 family.

It localises to the plastid. The protein localises to the chloroplast. Its function is as follows. Binds directly to 16S ribosomal RNA. In Gracilaria tenuistipitata var. liui (Red alga), this protein is Small ribosomal subunit protein bS20c.